Here is a 344-residue protein sequence, read N- to C-terminus: N-lysine methyltransferase KMT5A-A (344 aa).

Residues 143–176 (TSSKHRKPARRKVKRSTKRAAESKSPANRKVTDY) are disordered. Positions 145–160 (SKHRKPARRKVKRSTK) are enriched in basic residues. Residues 208 to 329 (DGMMVRFIEG…EGEELLYDYG (122 aa)) form the SET domain. Residues 218-220 (KGR), Tyr263, and 290-291 (NH) each bind S-adenosyl-L-methionine.

The protein belongs to the class V-like SAM-binding methyltransferase superfamily. Histone-lysine methyltransferase family. PR/SET subfamily.

The protein resides in the nucleus. It localises to the chromosome. It catalyses the reaction L-lysyl(20)-[histone H4] + S-adenosyl-L-methionine = N(6)-methyl-L-lysyl(20)-[histone H4] + S-adenosyl-L-homocysteine + H(+). It carries out the reaction L-lysyl-[protein] + S-adenosyl-L-methionine = N(6)-methyl-L-lysyl-[protein] + S-adenosyl-L-homocysteine + H(+). In terms of biological role, protein-lysine N-methyltransferase that monomethylates both histones and non-histone proteins. Specifically monomethylates 'Lys-20' of histone H4 (H4K20me1). H4K20me1 is enriched during mitosis and represents a specific tag for epigenetic transcriptional repression. Mainly functions in euchromatin regions, thereby playing a central role in the silencing of euchromatic genes. Required for cell proliferation, probably by contributing to the maintenance of proper higher-order structure of DNA during mitosis. Involved in chromosome condensation and proper cytokinesis. The sequence is that of N-lysine methyltransferase KMT5A-A from Danio rerio (Zebrafish).